A 138-amino-acid chain; its full sequence is Thyrotropin subunit beta (138 aa).

Residues 1-20 (MTAIFLMSMVFGLACGQTMS) form the signal peptide. Intrachain disulfides connect C22–C72, C36–C87, C39–C125, C47–C103, C51–C105, and C108–C115. A glycan (N-linked (GlcNAc...) asparagine) is linked at N43. Positions 133 to 138 (VVEFSI) are excised as a propeptide.

The protein belongs to the glycoprotein hormones subunit beta family. Heterodimer of a common alpha chain and a unique beta chain which confers biological specificity to thyrotropin, lutropin, follitropin and gonadotropin.

The protein localises to the secreted. In terms of biological role, indispensable for the control of thyroid structure and metabolism. This chain is Thyrotropin subunit beta (TSHB), found in Equus caballus (Horse).